We begin with the raw amino-acid sequence, 127 residues long: UPF0325 protein VV1_1856 (127 aa).

It belongs to the UPF0325 family.

The protein is UPF0325 protein VV1_1856 of Vibrio vulnificus (strain CMCP6).